The sequence spans 632 residues: Glycerophosphodiester phosphodiesterase domain-containing protein 4 (632 aa).

Residues 1–64 (MEETQDSSSS…GSCCCSRKEQ (64 aa)) are Cytoplasmic-facing. A helical transmembrane segment spans residues 65–85 (FFYMCLVIAFILSVLFLFVWV). Residues 86-114 (ETSNEYNGFDWVVYLGTGCWFFWSILVLS) are Extracellular-facing. The chain crosses the membrane as a helical span at residues 115–135 (AAGIMVAYTTLLLLLGFLLLW). Topologically, residues 136–147 (ERIELNLHTSHK) are cytoplasmic. The helical transmembrane segment at 148–168 (VFICLVIVLCSFLLAVLSHFW) threads the bilayer. The Extracellular segment spans residues 169–180 (KDKWLIAGLSLQ). The helical transmembrane segment at 181-201 (IFAPFVHLSLITVMIIISWPL) threads the bilayer. Residues 202–240 (SICVARLESEVKVRRYRMADYEQEIQERCNVFQRLRALQ) lie on the Cytoplasmic side of the membrane. Residues 241 to 261 (IAAGLSFLIILLCLYLMPLGI) form a helical membrane-spanning segment. Over 262–542 (YSPCILKKEN…SRPLFFMTPG (281 aa)) the chain is Extracellular. The region spanning 276 to 533 (PTLFGHRGAP…DNIELLNQLS (258 aa)) is the GP-PDE domain. A divalent metal cation-binding residues include Glu-308, Asp-310, and His-323. N-linked (GlcNAc...) asparagine glycans are attached at residues Asn-343, Asn-349, Asn-384, and Asn-473. Residues 543–563 (FYMFMWLFLDIASAVIIGFVF) traverse the membrane as a helical segment. The Cytoplasmic segment spans residues 564–632 (CYNWIKEIKR…QKTEPKTENL (69 aa)). The interval 596-632 (ENNDASQQKPEVAPTSANLAPENMIELQKTEPKTENL) is disordered. Positions 623-632 (QKTEPKTENL) are enriched in basic and acidic residues.

It belongs to the glycerophosphoryl diester phosphodiesterase family. In terms of tissue distribution, detected in testis, in particular in spermatocytes.

The protein resides in the cytoplasm. It localises to the membrane. This is Glycerophosphodiester phosphodiesterase domain-containing protein 4 (Gdpd4) from Mus musculus (Mouse).